The chain runs to 267 residues: Myxobacterial hemagglutinin (267 aa).

4 consecutive repeat copies span residues 1–66 (MAAY…GTLS), 67–133 (SANN…SEVT), 134–200 (DGDT…GTLT), and 201–267 (SPDT…ARLG). A 4 X 65 AA tandem repeats region spans residues 1–267 (MAAYLVQNQW…GPIGFRARLG (267 aa)).

It belongs to the bacterial lectin family.

In terms of biological role, this lectin might have a role in the differentiation of cells. This chain is Myxobacterial hemagglutinin (mbhA), found in Myxococcus xanthus.